The following is a 525-amino-acid chain: Asparagine synthetase [glutamine-hydrolyzing] (525 aa).

Cys-2 (for GATase activity) is an active-site residue. The 184-residue stretch at 2–185 (CGILAVLGCS…PGHLYSSKEG (184 aa)) folds into the Glutamine amidotransferase type-2 domain. L-glutamine-binding positions include 50-54 (RLAII), 75-77 (NGE), and Asp-98. An Asparagine synthetase domain is found at 193-517 (PPWFSEVIPS…QIDSPWRSKC (325 aa)). ATP contacts are provided by residues Leu-231, Val-267, and 341 to 342 (SG).

It catalyses the reaction L-aspartate + L-glutamine + ATP + H2O = L-asparagine + L-glutamate + AMP + diphosphate + H(+). It participates in amino-acid biosynthesis; L-asparagine biosynthesis; L-asparagine from L-aspartate (L-Gln route): step 1/1. Its function is as follows. Could play a role in remobilization of nitrogen in flowers during senescence. This Sandersonia aurantiaca (Christmas-bells) protein is Asparagine synthetase [glutamine-hydrolyzing] (AND1).